The chain runs to 301 residues: tRNA pseudouridine synthase B (301 aa).

Aspartate 48 functions as the Nucleophile in the catalytic mechanism.

This sequence belongs to the pseudouridine synthase TruB family. Type 1 subfamily.

It catalyses the reaction uridine(55) in tRNA = pseudouridine(55) in tRNA. In terms of biological role, responsible for synthesis of pseudouridine from uracil-55 in the psi GC loop of transfer RNAs. The chain is tRNA pseudouridine synthase B from Mycobacterium ulcerans (strain Agy99).